A 100-amino-acid chain; its full sequence is Urease subunit gamma (100 aa).

This sequence belongs to the urease gamma subunit family. In terms of assembly, heterotrimer of UreA (gamma), UreB (beta) and UreC (alpha) subunits. Three heterotrimers associate to form the active enzyme.

Its subcellular location is the cytoplasm. The enzyme catalyses urea + 2 H2O + H(+) = hydrogencarbonate + 2 NH4(+). It functions in the pathway nitrogen metabolism; urea degradation; CO(2) and NH(3) from urea (urease route): step 1/1. This Bradyrhizobium diazoefficiens (strain JCM 10833 / BCRC 13528 / IAM 13628 / NBRC 14792 / USDA 110) protein is Urease subunit gamma.